Consider the following 262-residue polypeptide: Acyl-[acyl-carrier-protein]--UDP-N-acetylglucosamine O-acyltransferase (262 aa).

This sequence belongs to the transferase hexapeptide repeat family. LpxA subfamily. Homotrimer.

It is found in the cytoplasm. It carries out the reaction a (3R)-hydroxyacyl-[ACP] + UDP-N-acetyl-alpha-D-glucosamine = a UDP-3-O-[(3R)-3-hydroxyacyl]-N-acetyl-alpha-D-glucosamine + holo-[ACP]. It participates in glycolipid biosynthesis; lipid IV(A) biosynthesis; lipid IV(A) from (3R)-3-hydroxytetradecanoyl-[acyl-carrier-protein] and UDP-N-acetyl-alpha-D-glucosamine: step 1/6. In terms of biological role, involved in the biosynthesis of lipid A, a phosphorylated glycolipid that anchors the lipopolysaccharide to the outer membrane of the cell. The protein is Acyl-[acyl-carrier-protein]--UDP-N-acetylglucosamine O-acyltransferase of Shigella boydii serotype 18 (strain CDC 3083-94 / BS512).